Here is a 625-residue protein sequence, read N- to C-terminus: Exonuclease mut-7 homolog (625 aa).

Serine 17 carries the post-translational modification Phosphoserine. Positions leucine 410 to serine 602 constitute a 3'-5' exonuclease domain.

Belongs to the mut-7 family. Interacts with AGO1; the interaction is not RNA dependent. Requires Mg(2+) as cofactor.

Possesses 3'-5' exoribonuclease activity. Required for 3'-end trimming of AGO1-bound miRNAs, in particular multiple-isoform miRNAs, which represents a critical step in miRNA maturation. This chain is Exonuclease mut-7 homolog (Nbr), found in Drosophila melanogaster (Fruit fly).